We begin with the raw amino-acid sequence, 172 residues long: 18.6 kDa class III heat shock protein (172 aa).

The interval 29 to 54 (RRSAGDHAHHAAHGHGQHRISGIGGG) is disordered. A sHSP domain is found at 48-172 (ISGIGGGAPV…KTKSVQVTIA (125 aa)).

It belongs to the small heat shock protein (HSP20) family. May form oligomeric structures.

The protein resides in the cytoplasm. This is 18.6 kDa class III heat shock protein (HSP18.6) from Oryza sativa subsp. japonica (Rice).